The sequence spans 798 residues: Cold shock domain-containing protein E1 (798 aa).

Residues 26-87 form the CSD 1 domain; it reads ETGVIEKLLT…RTGKPIAIKL (62 aa). Residue lysine 81 is modified to N6-acetyllysine. Lysine 91 is covalently cross-linked (Glycyl lysine isopeptide (Lys-Gly) (interchain with G-Cter in SUMO2)). A Phosphoserine modification is found at serine 123. One can recognise a CSD 2; truncated domain in the interval 136–179; it reads VFYLTYTSEDVEGNVQLETGDKINFVIDNNKHTGAVSARNIMLL. The CSD 3 domain occupies 186 to 245; it reads YQGVVCAMKEAFGFIERGDVVKEIFFHYSEFKGDLETLQPGDDVEFTIKDRNGKEVATDV. Serine 276 carries the phosphoserine modification. Positions 297 to 337 constitute a CSD 4; truncated domain; sequence LPFGDKDTKSKVTLLEGDHVRFNISTDRRDKLERATNIEVL. 2 consecutive CSD domains span residues 349 to 410 and 447 to 507; these read EMGV…AIRI and NKGK…ATCV. Phosphoserine is present on serine 514. The 61-residue stretch at 519–579 folds into the CSD 7 domain; that stretch reads LLGYVATLKD…KGNKVSAEKV (61 aa). Serine 584 is subject to Phosphoserine. CSD domains follow at residues 610–670 and 674–735; these read PTQI…AYNI and RRAT…ACNV. The 42-residue stretch at 748–789 folds into the SUZ-C domain; it reads PRPDRLVNRLKNITLDDASAPRLMVLRQPRGPDNSMGFGAER. Residue threonine 761 is modified to Phosphothreonine.

The protein belongs to the UNR family. Component of a multi subunit autoregulatory ribonucleoprotein complex (ARC), at least composed of IGF2BP1, PABPC1 and CSDE1. Interacts with STRAP. Part of a complex associated with the FOS mCRD domain and consisting of PABPC1, PAIP1, HNRPD and SYNCRIP. The interaction with PABPC1 is direct and RNA-independent. Interacts with EIF4ENIF1/4E-T.

The protein resides in the cytoplasm. Its subcellular location is the stress granule. It is found in the P-body. In terms of biological role, RNA-binding protein involved in translationally coupled mRNA turnover. Implicated with other RNA-binding proteins in the cytoplasmic deadenylation/translational and decay interplay of the FOS mRNA mediated by the major coding-region determinant of instability (mCRD) domain. Required for efficient formation of stress granules. This chain is Cold shock domain-containing protein E1, found in Rattus norvegicus (Rat).